A 700-amino-acid polypeptide reads, in one-letter code: Elongation factor G (700 aa).

The tr-type G domain maps to 8-290 (ERYRNIGISA…AVVEYLPAPT (283 aa)). Residues 17-24 (AHIDAGKT), 88-92 (DTPGH), and 142-145 (NKMD) contribute to the GTP site.

It belongs to the TRAFAC class translation factor GTPase superfamily. Classic translation factor GTPase family. EF-G/EF-2 subfamily.

The protein resides in the cytoplasm. Its function is as follows. Catalyzes the GTP-dependent ribosomal translocation step during translation elongation. During this step, the ribosome changes from the pre-translocational (PRE) to the post-translocational (POST) state as the newly formed A-site-bound peptidyl-tRNA and P-site-bound deacylated tRNA move to the P and E sites, respectively. Catalyzes the coordinated movement of the two tRNA molecules, the mRNA and conformational changes in the ribosome. This Haemophilus influenzae (strain 86-028NP) protein is Elongation factor G.